Here is a 337-residue protein sequence, read N- to C-terminus: Phosphatidate cytidylyltransferase, mitochondrial (337 aa).

The protein belongs to the TAM41 family. It depends on Mg(2+) as a cofactor.

It localises to the mitochondrion inner membrane. The catalysed reaction is a 1,2-diacyl-sn-glycero-3-phosphate + CTP + H(+) = a CDP-1,2-diacyl-sn-glycerol + diphosphate. Its pathway is phospholipid metabolism; CDP-diacylglycerol biosynthesis; CDP-diacylglycerol from sn-glycerol 3-phosphate: step 3/3. Catalyzes the conversion of phosphatidic acid (PA) to CDP-diacylglycerol (CDP-DAG), an essential intermediate in the synthesis of phosphatidylglycerol, cardiolipin and phosphatidylinositol. The sequence is that of Phosphatidate cytidylyltransferase, mitochondrial (Tamm41) from Mus musculus (Mouse).